The primary structure comprises 236 residues: 2,3,4,5-tetrahydropyridine-2,6-dicarboxylate N-acetyltransferase (236 aa).

Belongs to the transferase hexapeptide repeat family. DapH subfamily.

It catalyses the reaction (S)-2,3,4,5-tetrahydrodipicolinate + acetyl-CoA + H2O = L-2-acetamido-6-oxoheptanedioate + CoA. The protein operates within amino-acid biosynthesis; L-lysine biosynthesis via DAP pathway; LL-2,6-diaminopimelate from (S)-tetrahydrodipicolinate (acetylase route): step 1/3. Functionally, catalyzes the transfer of an acetyl group from acetyl-CoA to tetrahydrodipicolinate. This Clostridium botulinum (strain Eklund 17B / Type B) protein is 2,3,4,5-tetrahydropyridine-2,6-dicarboxylate N-acetyltransferase.